A 101-amino-acid chain; its full sequence is Cysteine-rich PDZ-binding protein (101 aa).

This sequence belongs to the CRIPT family. Component of the minor spliceosome, which splices U12-type introns.

The protein resides in the cytoplasm. As a component of the minor spliceosome, involved in the splicing of U12-type introns in pre-mRNAs. This Ictalurus punctatus (Channel catfish) protein is Cysteine-rich PDZ-binding protein (cript).